Reading from the N-terminus, the 332-residue chain is Methionine synthase (332 aa).

Zn(2+)-binding residues include histidine 211, cysteine 213, and cysteine 296.

Belongs to the archaeal MetE family. Zn(2+) is required as a cofactor.

Its pathway is amino-acid biosynthesis; L-methionine biosynthesis via de novo pathway. Functionally, catalyzes the transfer of a methyl group to L-homocysteine resulting in methionine formation. The physiological methyl donor is unknown. The sequence is that of Methionine synthase from Saccharolobus islandicus (strain Y.G.57.14 / Yellowstone #1) (Sulfolobus islandicus).